Reading from the N-terminus, the 158-residue chain is Antitoxin TacA (158 aa).

Belongs to the TacA antitoxin family. Forms a complex with cognate toxin TacT.

Functionally, antitoxin component of a type II toxin-antitoxin (TA) system. Counteracts the toxic effect of cognate toxin TacT. In terms of biological role, tacA-TacT both represses and derepresses expression of its own operon. This chain is Antitoxin TacA, found in Mycobacterium tuberculosis (strain ATCC 25618 / H37Rv).